A 193-amino-acid chain; its full sequence is Ribosomal RNA large subunit methyltransferase E (193 aa).

Residues Gly48, Phe50, Asp67, Asn85, and Asp107 each contribute to the S-adenosyl-L-methionine site. The active-site Proton acceptor is the Lys147.

Belongs to the class I-like SAM-binding methyltransferase superfamily. RNA methyltransferase RlmE family.

Its subcellular location is the cytoplasm. It catalyses the reaction uridine(2552) in 23S rRNA + S-adenosyl-L-methionine = 2'-O-methyluridine(2552) in 23S rRNA + S-adenosyl-L-homocysteine + H(+). Its function is as follows. Specifically methylates the uridine in position 2552 of 23S rRNA at the 2'-O position of the ribose in the fully assembled 50S ribosomal subunit. The polypeptide is Ribosomal RNA large subunit methyltransferase E (Borrelia duttonii (strain Ly)).